A 510-amino-acid chain; its full sequence is MMSMFDGLFADLKQARESFEPALSPREIGKITSVATGIAKVSGLPNVGYDELLLFPGDIYGIAFNVDEDEIGVVLLGEYWHLQAGDEVERLGHVVDVPVGDSLIGRIINPIGKPLDGKGNLGTTERLPIERPSPAIMDRAGVSVPLQTGIKVIDALIPVGRGQRELILGDRQTGKTAIAMDTILNQRGKNVLCVYCAIGQRASGVAKVIATLREQGAMEYTVVVVTEGNEPPGLAYVAPYAATSIAEYFMEQGRDVLIVYDDLTHHARAYRELSLLLRRPPGREAFPGDIFYIHSRLLERATHLSKELGGGSLTALPIIETEAQDISAYIPTNLISITDGQIYLSPALFELGILPAVDVGKSVSRVGGKAQRAAYRGVTVDLKLAYAQFEELETFARFGARLDDDTLKIIEHGRRIRACLKQPEFAPVSMAEQIAVLVALTADLFDDINLDNMPAAEQAVRDAAANITDDIVERLESTDKLSKDDKAVILELARQALETFSTDTDLGEPR.

Residue 169–176 coordinates ATP; it reads GDRQTGKT.

It belongs to the ATPase alpha/beta chains family. In terms of assembly, F-type ATPases have 2 components, CF(1) - the catalytic core - and CF(0) - the membrane proton channel. CF(1) has five subunits: alpha(3), beta(3), gamma(1), delta(1), epsilon(1). CF(0) has three main subunits: a(1), b(2) and c(9-12). The alpha and beta chains form an alternating ring which encloses part of the gamma chain. CF(1) is attached to CF(0) by a central stalk formed by the gamma and epsilon chains, while a peripheral stalk is formed by the delta and b chains.

It localises to the cell inner membrane. It carries out the reaction ATP + H2O + 4 H(+)(in) = ADP + phosphate + 5 H(+)(out). Produces ATP from ADP in the presence of a proton gradient across the membrane. The alpha chain is a regulatory subunit. This chain is ATP synthase subunit alpha 1, found in Marinomonas sp. (strain MWYL1).